The sequence spans 257 residues: 4-hydroxy-tetrahydrodipicolinate reductase (257 aa).

NAD(+) is bound by residues 7 to 12, aspartate 32, 91 to 93, and 115 to 118; these read GAAGRM, GTT, and SPNF. The Proton donor/acceptor role is filled by histidine 147. Histidine 148 contacts (S)-2,3,4,5-tetrahydrodipicolinate. The Proton donor role is filled by lysine 151. A (S)-2,3,4,5-tetrahydrodipicolinate-binding site is contributed by 157–158; the sequence is GT.

Belongs to the DapB family.

Its subcellular location is the cytoplasm. It catalyses the reaction (S)-2,3,4,5-tetrahydrodipicolinate + NAD(+) + H2O = (2S,4S)-4-hydroxy-2,3,4,5-tetrahydrodipicolinate + NADH + H(+). It carries out the reaction (S)-2,3,4,5-tetrahydrodipicolinate + NADP(+) + H2O = (2S,4S)-4-hydroxy-2,3,4,5-tetrahydrodipicolinate + NADPH + H(+). It functions in the pathway amino-acid biosynthesis; L-lysine biosynthesis via DAP pathway; (S)-tetrahydrodipicolinate from L-aspartate: step 4/4. In terms of biological role, catalyzes the conversion of 4-hydroxy-tetrahydrodipicolinate (HTPA) to tetrahydrodipicolinate. The sequence is that of 4-hydroxy-tetrahydrodipicolinate reductase from Archaeoglobus fulgidus (strain ATCC 49558 / DSM 4304 / JCM 9628 / NBRC 100126 / VC-16).